We begin with the raw amino-acid sequence, 66 residues long: Nigrocin-2ISa (66 aa).

The first 22 residues, 1–22 (MFTLKKSMLLLFFLGTINLSLC), serve as a signal peptide directing secretion. A propeptide spans 23–43 (QEERDAEEERRDEDNAKMEEI) (removed in mature form). Cysteine 60 and cysteine 66 form a disulfide bridge.

As to expression, expressed by the skin glands.

It is found in the secreted. Has antimicrobial activity against Gram-negative bacterium E.coli ATCC 8739 (MIC=25 ug), against Gram positive bacteria S.aureus ATCC 6538 (MIC=3.1 ug), methicillin-resistant S.aureus ATCC 43300 (MIC=12.5 ug), B.subtilis ATCC 6633 (MIC=12.5 ug) and against fungus C.albicans ATCC 90028 (MIC=50 ug). This Odorrana ishikawae (Ishikawa's frog) protein is Nigrocin-2ISa.